Reading from the N-terminus, the 388-residue chain is Mannitol-1-phosphate 5-dehydrogenase (388 aa).

NAD(+) is bound at residue 5–16 (AIQFGGGNIGRG). Residue K213 is part of the active site.

Belongs to the mannitol dehydrogenase family. As to quaternary structure, monomer.

The catalysed reaction is D-mannitol 1-phosphate + NAD(+) = beta-D-fructose 6-phosphate + NADH + H(+). Its function is as follows. Catalyzes the NAD(H)-dependent interconversion of D-fructose 6-phosphate and D-mannitol 1-phosphate in the mannitol metabolic pathway. This Aspergillus clavatus (strain ATCC 1007 / CBS 513.65 / DSM 816 / NCTC 3887 / NRRL 1 / QM 1276 / 107) protein is Mannitol-1-phosphate 5-dehydrogenase (mpdA).